Here is a 309-residue protein sequence, read N- to C-terminus: Methionyl-tRNA formyltransferase (309 aa).

112–115 (SLLP) lines the (6S)-5,6,7,8-tetrahydrofolate pocket.

This sequence belongs to the Fmt family.

It carries out the reaction L-methionyl-tRNA(fMet) + (6R)-10-formyltetrahydrofolate = N-formyl-L-methionyl-tRNA(fMet) + (6S)-5,6,7,8-tetrahydrofolate + H(+). In terms of biological role, attaches a formyl group to the free amino group of methionyl-tRNA(fMet). The formyl group appears to play a dual role in the initiator identity of N-formylmethionyl-tRNA by promoting its recognition by IF2 and preventing the misappropriation of this tRNA by the elongation apparatus. In Bartonella tribocorum (strain CIP 105476 / IBS 506), this protein is Methionyl-tRNA formyltransferase.